The sequence spans 377 residues: uncharacterized protein (377 aa).

This is an uncharacterized protein from Bacillus subtilis (strain 168).